We begin with the raw amino-acid sequence, 152 residues long: Large ribosomal subunit protein bL9 (152 aa).

The protein belongs to the bacterial ribosomal protein bL9 family.

Functionally, binds to the 23S rRNA. The sequence is that of Large ribosomal subunit protein bL9 from Nocardia farcinica (strain IFM 10152).